Consider the following 163-residue polypeptide: Steroid receptor-associated and regulated protein (163 aa).

Residues 1 to 16 show a composition bias toward basic and acidic residues; that stretch reads MAFSKDPRRTSLRDSS. Disordered regions lie at residues 1 to 30 and 96 to 149; these read MAFSKDPRRTSLRDSSVEMSSGTQPSCAPK and ALDG…EKVK. Positions 17-26 are enriched in polar residues; sequence VEMSSGTQPS.

As to quaternary structure, interacts with 14-3-3 proteins.

May regulate the transcriptional function of androgen and estrogen receptors. In Mus musculus (Mouse), this protein is Steroid receptor-associated and regulated protein.